The chain runs to 412 residues: CCA-adding enzyme (412 aa).

ATP contacts are provided by serine 41 and lysine 44. Residues serine 41 and lysine 44 each coordinate CTP. Mg(2+) contacts are provided by aspartate 53, aspartate 55, and aspartate 106. ATP contacts are provided by histidine 129, lysine 149, and tyrosine 158. Residues histidine 129, lysine 149, and tyrosine 158 each contribute to the CTP site.

It belongs to the tRNA nucleotidyltransferase/poly(A) polymerase family. Archaeal CCA-adding enzyme subfamily. As to quaternary structure, homodimer. Mg(2+) serves as cofactor.

It catalyses the reaction a tRNA precursor + 2 CTP + ATP = a tRNA with a 3' CCA end + 3 diphosphate. The catalysed reaction is a tRNA with a 3' CCA end + 2 CTP + ATP = a tRNA with a 3' CCACCA end + 3 diphosphate. In terms of biological role, catalyzes the addition and repair of the essential 3'-terminal CCA sequence in tRNAs without using a nucleic acid template. Adds these three nucleotides in the order of C, C, and A to the tRNA nucleotide-73, using CTP and ATP as substrates and producing inorganic pyrophosphate. tRNA 3'-terminal CCA addition is required both for tRNA processing and repair. Also involved in tRNA surveillance by mediating tandem CCA addition to generate a CCACCA at the 3' terminus of unstable tRNAs. While stable tRNAs receive only 3'-terminal CCA, unstable tRNAs are marked with CCACCA and rapidly degraded. This chain is CCA-adding enzyme, found in Saccharolobus islandicus (strain Y.G.57.14 / Yellowstone #1) (Sulfolobus islandicus).